Reading from the N-terminus, the 436-residue chain is UPF0597 protein YhaM (436 aa).

This sequence belongs to the UPF0597 family.

The polypeptide is UPF0597 protein YhaM (Shigella boydii serotype 4 (strain Sb227)).